The following is a 25-amino-acid chain: Caerin-1.6 (25 aa).

Leu-25 is subject to Leucine amide.

The protein belongs to the frog skin active peptide (FSAP) family. Caerin subfamily. In terms of tissue distribution, expressed by the skin dorsal glands.

It localises to the secreted. Functionally, antimicrobial peptide. Adopts an alpha helical conformation which can disrupt bacterial membranes. Strongly inhibits the formation of NO by neuronal nitric oxide synthase (nNOS) at micromolar concentrations. Acts by a non-competitive mechanism, probably by binding to calcium/calmodulin and as a consequence blocking calmodulin attachment to nNOS. Its function is as follows. Does not show antimicrobial activity. This Ranoidea chloris (Red-eyed tree frog) protein is Caerin-1.6.